The following is a 456-amino-acid chain: Myricetin 3-O-rhamnosyltransferase UGT77B2 (456 aa).

Residue His-19 is the Proton acceptor of the active site. His-19 is an an anthocyanidin binding site. The Charge relay role is filled by Asp-116. His-147 lines the an anthocyanidin pocket. Residues Thr-279, Ala-334, His-351, Asn-355, and Glu-359 each contribute to the UDP-beta-L-rhamnose site. Ala-374 provides a ligand contact to an anthocyanidin.

It belongs to the UDP-glycosyltransferase family. As to expression, expressed in young cromes.

The enzyme catalyses myricetin + UDP-beta-L-rhamnose = myricetin 3-O-alpha-L-rhamnoside + UDP + H(+). It functions in the pathway flavonoid metabolism. Functionally, rhamnosyltransferase involved in montbretin A (MbA) biosynthesis. Catalyzes the 3-O rhamnosylation of myricetin to produce myricetin 3-O-alpha-L-rhamnoside (MR), a precursor of MbA. MbA is a potent inhibitor of human pancreatic alpha-amylase and is being developed as drug candidate to treat type-2 diabetes. In vitro, is able to transfer UDP-glucose and UDP-xylose with 50-fold less efficiency compared with UDP-rhamnose. In vitro, can use kaempferol or quercetin as substrates, although these two flavonols may not be physiological substrates in vivo. The protein is Myricetin 3-O-rhamnosyltransferase UGT77B2 of Crocosmia x crocosmiiflora (Montbretia).